Here is a 271-residue protein sequence, read N- to C-terminus: Structure-specific endonuclease subunit SLX1 (271 aa).

The region spanning R9–V94 is the GIY-YIG domain. The SLX1-type zinc finger occupies C182–C234.

The protein belongs to the SLX1 family. Forms a heterodimer with SLX4. A divalent metal cation serves as cofactor.

It is found in the nucleus. In terms of biological role, catalytic subunit of the SLX1-SLX4 structure-specific endonuclease that resolves DNA secondary structures generated during DNA repair and recombination. Has endonuclease activity towards branched DNA substrates, introducing single-strand cuts in duplex DNA close to junctions with ss-DNA. Has a preference for 5'-flap structures, and promotes symmetrical cleavage of static and migrating Holliday junctions (HJs). Resolves HJs by generating two pairs of ligatable, nicked duplex products. This chain is Structure-specific endonuclease subunit SLX1 (Slx1b), found in Rattus norvegicus (Rat).